The chain runs to 466 residues: 55 kDa erythrocyte membrane protein (466 aa).

Thr-2 is modified (N-acetylthreonine). Residues Ser-13 and Ser-19 each carry the phosphoserine modification. Thr-49 bears the Phosphothreonine mark. Ser-52, Ser-57, and Ser-110 each carry phosphoserine. A PDZ domain is found at 71 to 152; the sequence is LIQFEKVTEE…MISLKVIPNQ (82 aa). One can recognise an SH3 domain in the interval 158-228; it reads ALQMFMRAQF…PSPELQEWRV (71 aa). The residue at position 243 (Ser-243) is a Phosphoserine. The tract at residues 268 to 466 is interaction with PALS1; the sequence is VVSYEEVVRL…PQWVPVSWVY (199 aa). In terms of domain architecture, Guanylate kinase-like spans 282 to 451; the sequence is RKTLVLIGAS…TLKKLQEAFD (170 aa).

This sequence belongs to the MAGUK family. In terms of assembly, heterodimer with PALS1. Interacts with DLG5 and NF2. Interacts (via guanylate kinase-like domain) with WHRN (via third PDZ domain). In terms of processing, palmitoylated. As to expression, ubiquitous.

The protein resides in the cell membrane. The protein localises to the cell projection. It is found in the stereocilium. Essential regulator of neutrophil polarity. Regulates neutrophil polarization by regulating AKT1 phosphorylation through a mechanism that is independent of PIK3CG activity. The polypeptide is 55 kDa erythrocyte membrane protein (MPP1) (Homo sapiens (Human)).